Consider the following 411-residue polypeptide: 2,3-bisphosphoglycerate-independent phosphoglycerate mutase (411 aa).

It belongs to the BPG-independent phosphoglycerate mutase family. A-PGAM subfamily.

The enzyme catalyses (2R)-2-phosphoglycerate = (2R)-3-phosphoglycerate. It functions in the pathway carbohydrate degradation; glycolysis; pyruvate from D-glyceraldehyde 3-phosphate: step 3/5. Functionally, catalyzes the interconversion of 2-phosphoglycerate and 3-phosphoglycerate. This is 2,3-bisphosphoglycerate-independent phosphoglycerate mutase from Pyrobaculum calidifontis (strain DSM 21063 / JCM 11548 / VA1).